The sequence spans 324 residues: Tetrachlorobenzoquinone reductase (324 aa).

In terms of domain architecture, FAD-binding FR-type spans 5–107 (VSTIDMTVTQ…VPPANNFALV (103 aa)). The 2Fe-2S ferredoxin-type domain occupies 238-324 (FTVVLARRSG…SKSPRLVLDI (87 aa)). Cys-273, Cys-278, Cys-281, and Cys-311 together coordinate [2Fe-2S] cluster.

This sequence belongs to the PDR/VanB family. In terms of assembly, homotrimer. The cofactor is FMN. [2Fe-2S] cluster is required as a cofactor.

The enzyme catalyses 2,3,5,6-tetrachlorohydroquinone + NAD(+) + H(+) = 2,3,5,6-tetrachloro-1,4-benzoquinone + NADH. Its pathway is xenobiotic degradation; pentachlorophenol degradation. In vitro, activated by tetrachlorohydroquinone (TCHQ) at low concentrations and inhibited at high concentrations (above 200 uM). However, PcpD would only be stimulated by tetrachlorohydroquinone (TCHQ) under in vivo conditions due to the toxicity of tetrachlorohydroquinone (TCHQ). Competitively inhibited by pentachlorophenol (PCP) in a concentration-dependent manner. PcpD is regulated by tetrachlorohydroquinone (TCHQ) and pentachlorophenol (PCP) using a mechanism, which maintains tetrachlorobenzoquinone at a level that would neither significantly decrease the biodegradation of pentachlorophenol (PCP) nor cause cytotoxicity in cells. Involved in the degradation of the xenobiocide pentachlorophenol (PCP). Catalyzes the reduction of tetrachlorobenzoquinone (TCBQ) to yield tetrachlorohydroquinone (TCHQ). Also able to reduce 2,6-dichloroindophenol (DCIP). In Sphingobium chlorophenolicum, this protein is Tetrachlorobenzoquinone reductase.